Consider the following 428-residue polypeptide: Serine--tRNA ligase (428 aa).

235-237 contacts L-serine; it reads TAE. Residue 266–268 participates in ATP binding; that stretch reads RSE. Residue Glu-289 coordinates L-serine. 353-356 contributes to the ATP binding site; that stretch reads EISS. Position 389 (Ser-389) interacts with L-serine.

It belongs to the class-II aminoacyl-tRNA synthetase family. Type-1 seryl-tRNA synthetase subfamily. As to quaternary structure, homodimer. The tRNA molecule binds across the dimer.

Its subcellular location is the cytoplasm. It catalyses the reaction tRNA(Ser) + L-serine + ATP = L-seryl-tRNA(Ser) + AMP + diphosphate + H(+). It carries out the reaction tRNA(Sec) + L-serine + ATP = L-seryl-tRNA(Sec) + AMP + diphosphate + H(+). Its pathway is aminoacyl-tRNA biosynthesis; selenocysteinyl-tRNA(Sec) biosynthesis; L-seryl-tRNA(Sec) from L-serine and tRNA(Sec): step 1/1. Functionally, catalyzes the attachment of serine to tRNA(Ser). Is also able to aminoacylate tRNA(Sec) with serine, to form the misacylated tRNA L-seryl-tRNA(Sec), which will be further converted into selenocysteinyl-tRNA(Sec). This Shewanella sediminis (strain HAW-EB3) protein is Serine--tRNA ligase.